A 115-amino-acid polypeptide reads, in one-letter code: Histidine-rich carboxyl terminus protein 1 (115 aa).

A helical transmembrane segment spans residues 9 to 29; it reads ALVGWITGAAVAVLLLLLLLA. Positions 86 to 115 are disordered; sequence GLHHHHHPRHTPHHLHHHHHPHRHHPRHAR. Over residues 87-115 the composition is skewed to basic residues; it reads LHHHHHPRHTPHHLHHHHHPHRHHPRHAR.

Its subcellular location is the membrane. The protein is Histidine-rich carboxyl terminus protein 1 (HRCT1) of Homo sapiens (Human).